The following is a 192-amino-acid chain: uncharacterized protein (192 aa).

The segment at 71–100 (NNVLPEPSKPNNPVVNPPVSPIQPKTDPEQ) is disordered. Residues 77–91 (PSKPNNPVVNPPVSP) are compositionally biased toward pro residues.

This is an uncharacterized protein from Caenorhabditis elegans.